Reading from the N-terminus, the 798-residue chain is Integrin beta-1 (798 aa).

The first 20 residues, 1–20 (MNLQLIFWIGLISSICCVFG), serve as a signal peptide directing secretion. The Extracellular portion of the chain corresponds to 21-728 (QADENRCLKA…ETPECPTGPD (708 aa)). The PSI domain occupies 26–76 (RCLKANAKSCGECIQAGPNCGWCVNSTFLQEGMPTSARCDDLEALKKKGCH). Disulfide bonds link Cys27–Cys45, Cys35–Cys464, Cys38–Cys64, Cys48–Cys75, Cys207–Cys213, Cys261–Cys301, Cys401–Cys415, Cys435–Cys462, Cys466–Cys486, Cys477–Cys489, Cys491–Cys500, Cys502–Cys533, Cys516–Cys531, Cys525–Cys536, Cys538–Cys553, Cys555–Cys576, Cys560–Cys574, Cys568–Cys579, Cys581–Cys590, Cys592–Cys615, Cys599–Cys613, Cys607–Cys618, Cys620–Cys630, Cys633–Cys636, Cys640–Cys691, Cys646–Cys665, Cys649–Cys661, and Cys699–Cys723. Asn50 is a glycosylation site (N-linked (GlcNAc...) asparagine). Basic and acidic residues predominate over residues 75-91 (CHPDDIENPRGSKDVKK). The disordered stretch occupies residues 75 to 107 (CHPDDIENPRGSKDVKKNKNVTNRSKGTAEKLQ). 2 N-linked (GlcNAc...) asparagine glycosylation sites follow: Asn94 and Asn97. The VWFA domain maps to 140–378 (DYPIDLYYLM…QLIIDAYNSL (239 aa)). 2 residues coordinate Mg(2+): Ser152 and Ser154. Ca(2+) contacts are provided by Ser154, Asp157, Asp158, and Glu189. Positions 207–213 (CTSEQNC) are CX3CL1-binding. Asn212 carries N-linked (GlcNAc...) asparagine glycosylation. Residues Asn244, Asp246, Pro248, and Glu249 each contribute to the Ca(2+) site. Residue Glu249 participates in Mg(2+) binding. N-linked (GlcNAc...) asparagine glycosylation is present at Asn269. The tract at residues 295–314 (LPNDGQCHLENDVYTMSHYY) is CX3CL1-binding. Ala362 is a Ca(2+) binding site. N-linked (GlcNAc...) asparagine glycosylation is found at Asn363, Asn406, and Asn417. Positions 383–465 (ILENSKLPEG…IILQFICECE (83 aa)) are interaction with TMEM182. I-EGF domains lie at 466-501 (CQNE…RHCE), 502-554 (CSTD…KFCE), 555-591 (CDNF…SACD), and 592-631 (CSLD…PTCE). Asn481 is a glycosylation site (N-linked (GlcNAc...) asparagine). N-linked (GlcNAc...) asparagine glycosylation is present at Asn520. The N-linked (GlcNAc...) asparagine glycan is linked to Asn584. Asn669 is a glycosylation site (N-linked (GlcNAc...) asparagine). Residues 729–751 (IIPIVAGVVAGIVLIGLALLLIW) form a helical membrane-spanning segment. The Cytoplasmic portion of the chain corresponds to 752–798 (KLLMIIHDTREFAKFEKEKMNAKWDTGENPIYKSAVTTVVNPKYEGK). The interval 762 to 767 (EFAKFE) is signal for sorting from recycling endosomes; interaction with ACAP1. Position 777 is a phosphothreonine (Thr777). Tyr783 carries the phosphotyrosine modification. Ser785 is modified (phosphoserine). The segment at 785-792 (SAVTTVVN) is interaction with ITGB1BP1. Thr789 carries the post-translational modification Phosphothreonine. Lys794 carries the post-translational modification N6-acetyllysine; alternate. Lys794 participates in a covalent cross-link: Glycyl lysine isopeptide (Lys-Gly) (interchain with G-Cter in SUMO1); alternate.

Belongs to the integrin beta chain family. Interacts with seprase FAP (seprase); the interaction occurs at the cell surface of invadopodia membrane in a collagen-dependent manner. Heterodimer of an alpha and a beta subunit. Beta-1 associates with either alpha-1, alpha-2, alpha-3, alpha-4, alpha-5, alpha-6, alpha-7, alpha-8, alpha-9, alpha-10, alpha-11 or alpha-V. ITGA6:ITGB1 is found in a complex with CD9; interaction takes place in oocytes and is involved in sperm-egg fusion. Binds LGALS3BP and NMRK2, when associated with alpha-7, but not with alpha-5. Interacts with FLNA, FLNB, FLNC and RANBP9. Interacts with KRT1 in the presence of RACK1 and SRC. Interacts with JAML; integrin alpha-4/beta-1 may regulate leukocyte to endothelial cells adhesion by controlling JAML homodimerization. Interacts with RAB21. Interacts (via the cytoplasmic region) with RAB25 (via the hypervariable C-terminal region). Interacts with MYO10. Interacts with ITGB1BP1 (via C-terminal region); the interaction is a prerequisite for focal adhesion disassembly. Interacts with TLN1; the interaction is prevented by competitive binding of ITGB1BP1. Interacts with ACAP1; required for ITGB1 recycling. Interacts with ASAP3. Interacts with FERMT2; the interaction is inhibited in presence of ITGB1BP1. Interacts with DAB2. Interacts with FGR and HCK. Interacts with alpha-7A and alpha-7B in adult skeletal muscle. Interacts with alpha-7B in cardiomyocytes of adult heart. Interacts with EMP2; the interaction may be direct or indirect and ITGB1 has a heterodimer form. ITGA5:ITGB1 interacts with CCN3. ITGA4:ITGB1 is found in a ternary complex with CX3CR1 and CX3CL1. ITGA5:ITGB1 interacts with FBN1. ITGA5:ITGB1 acts as a receptor for fibronectin FN1 and mediates R-G-D-dependent cell adhesion to FN1. ITGA5:ITGB1 interacts with IL1B. Interacts with MDK. ITGA4:ITGB1 interacts with MDK; this interaction mediates MDK-induced osteoblast cells migration through PXN phosphorylation. ITGA6:ITGB1 interacts with MDK; this interaction mediates MDK-induced neurite-outgrowth. ITGA5:ITGB1 interacts with ACE2. Interacts with TMEM182 and LAMB1. Interacts with tensin TNS3; TNS3 also interacts with PEAK1, thus acting as an adapter molecule to bridge the association of PEAK1 with ITGB1. Interacts with tensin TNS4; the interaction displaces tensin TNS3 from the ITGB1 cytoplasmic tail and promotes ITGB1 stability. Integrin ITGA9:ITGB1 interacts with SPP1/OPN (via N-terminus). Integrin ITGA9:ITGB1 interacts with TNC/TNFN3 (via the 3rd Fibronectin type-III domain). Integrins ITGA4:ITGB1 and ITGA9:ITGB1 interact with SVEP1 (via Sushi domain 21); thereby inhibit Ca(2+) intracellular signaling and as a result repress vasocontraction. ITGA4:ITGB1 and ITGA5:ITGB1 interacts with SELP. Interacts with CD248. ITGA5:ITGB1 interacts with IGFBP1. ITGA4:ITGB1 interacts with BCAM. Interacts with ADGRG6.

The protein localises to the cell membrane. The protein resides in the cell projection. Its subcellular location is the invadopodium membrane. It localises to the ruffle membrane. It is found in the recycling endosome. The protein localises to the melanosome. The protein resides in the lamellipodium. Its subcellular location is the ruffle. It localises to the cell junction. It is found in the focal adhesion. In terms of biological role, integrins alpha-1/beta-1, alpha-2/beta-1, alpha-10/beta-1 and alpha-11/beta-1 are receptors for collagen. Integrins alpha-1/beta-1 and alpha-2/beta-2 recognize the proline-hydroxylated sequence G-F-P-G-E-R in collagen. Integrins alpha-2/beta-1, alpha-3/beta-1, alpha-4/beta-1, alpha-5/beta-1, alpha-8/beta-1, alpha-10/beta-1, alpha-11/beta-1 and alpha-V/beta-1 are receptors for fibronectin. Alpha-4/beta-1 recognizes one or more domains within the alternatively spliced CS-1 and CS-5 regions of fibronectin. Integrin alpha-5/beta-1 is a receptor for fibrinogen. Integrin alpha-1/beta-1, alpha-2/beta-1, alpha-6/beta-1 and alpha-7/beta-1 are receptors for lamimin. Integrin alpha-6/beta-1 (ITGA6:ITGB1) is present in oocytes and is involved in sperm-egg fusion. Integrin alpha-4/beta-1 is a receptor for VCAM1 and recognizes the sequence Q-I-D-S in VCAM1. Integrin alpha-9/beta-1 is a receptor for VCAM1, cytotactin and osteopontin. It recognizes the sequence A-E-I-D-G-I-E-L in cytotactin. Integrin alpha-3/beta-1 is a receptor for epiligrin, thrombospondin and CSPG4. Integrin alpha-3/beta-1 provides a docking site for FAP (seprase) at invadopodia plasma membranes in a collagen-dependent manner and hence may participate in the adhesion, formation of invadopodia and matrix degradation processes, promoting cell invasion. Alpha-3/beta-1 may mediate with LGALS3 the stimulation by CSPG4 of endothelial cells migration. Integrin alpha-V/beta-1 is a receptor for vitronectin. Beta-1 integrins recognize the sequence R-G-D in a wide array of ligands. When associated with alpha-7/beta-1 integrin, regulates cell adhesion and laminin matrix deposition. Involved in promoting endothelial cell motility and angiogenesis. Involved in osteoblast compaction through the fibronectin fibrillogenesis cell-mediated matrix assembly process and the formation of mineralized bone nodules. May be involved in up-regulation of the activity of kinases such as PKC via binding to KRT1. Together with KRT1 and RACK1, serves as a platform for SRC activation or inactivation. Plays a mechanistic adhesive role during telophase, required for the successful completion of cytokinesis. ITGA4:ITGB1 binds to fractalkine (CX3CL1) and may act as its coreceptor in CX3CR1-dependent fractalkine signaling. ITGA4:ITGB1 and ITGA5:ITGB1 bind to PLA2G2A via a site (site 2) which is distinct from the classical ligand-binding site (site 1) and this induces integrin conformational changes and enhanced ligand binding to site 1. ITGA5:ITGB1 acts as a receptor for fibrillin-1 (FBN1) and mediates R-G-D-dependent cell adhesion to FBN1. ITGA5:ITGB1 is a receptor for IL1B and binding is essential for IL1B signaling. ITGA5:ITGB3 is a receptor for soluble CD40LG and is required for CD40/CD40LG signaling. Plays an important role in myoblast differentiation and fusion during skeletal myogenesis. ITGA9:ITGB1 may play a crucial role in SVEP1/polydom-mediated myoblast cell adhesion. Integrins ITGA9:ITGB1 and ITGA4:ITGB1 repress PRKCA-mediated L-type voltage-gated channel Ca(2+) influx and ROCK-mediated calcium sensitivity in vascular smooth muscle cells via their interaction with SVEP1, thereby inhibit vasocontraction. The chain is Integrin beta-1 (ITGB1) from Felis catus (Cat).